Here is a 135-residue protein sequence, read N- to C-terminus: Small ribosomal subunit protein uS12 (135 aa).

Position 89 is a 3-methylthioaspartic acid (D89). The interval 108–135 (NKRTVSRSKYGTKKAKATDKKATDNKKK) is disordered. Basic residues predominate over residues 111–122 (TVSRSKYGTKKA). Positions 123–135 (KATDKKATDNKKK) are enriched in basic and acidic residues.

Belongs to the universal ribosomal protein uS12 family. As to quaternary structure, part of the 30S ribosomal subunit. Contacts proteins S8 and S17. May interact with IF1 in the 30S initiation complex.

With S4 and S5 plays an important role in translational accuracy. Functionally, interacts with and stabilizes bases of the 16S rRNA that are involved in tRNA selection in the A site and with the mRNA backbone. Located at the interface of the 30S and 50S subunits, it traverses the body of the 30S subunit contacting proteins on the other side and probably holding the rRNA structure together. The combined cluster of proteins S8, S12 and S17 appears to hold together the shoulder and platform of the 30S subunit. The polypeptide is Small ribosomal subunit protein uS12 (Helicobacter pylori (strain P12)).